Consider the following 199-residue polypeptide: Recombination protein RecR (199 aa).

The C4-type zinc finger occupies 57–72 (CQSCRTYTEETLCPIC). Positions 81–176 (STICVVETPA…MISRIAHGVP (96 aa)) constitute a Toprim domain.

The protein belongs to the RecR family.

May play a role in DNA repair. It seems to be involved in an RecBC-independent recombinational process of DNA repair. It may act with RecF and RecO. The sequence is that of Recombination protein RecR from Shewanella putrefaciens (strain CN-32 / ATCC BAA-453).